A 957-amino-acid chain; its full sequence is Dystrophin-related protein 2 (957 aa).

Spectrin repeat units lie at residues 102-179 (DHSG…EELE) and 231-337 (EQLL…QLQD). One can recognise a WW domain in the interval 358 to 383 (WERAISPNKVPYYINHQAQTTCWDHP). The ZZ-type; degenerate zinc finger occupies 605 to 661 (KHQTKCSICRQCPIKGFRYRSLKQFNVDICQTCFLTGRASKGNKLHYPIMEYYTPTT). The Zn(2+) site is built by Cys-610, Cys-613, Cys-634, and Cys-637. Position 748 is a phosphoserine (Ser-748). Low complexity predominate over residues 877–900 (PPTESDGSGSAGSSLASSPQQSEG). The segment at 877-923 (PPTESDGSGSAGSSLASSPQQSEGSHPREKGQTTPDTEAADDVGSKS) is disordered. The residue at position 910 (Thr-910) is a Phosphothreonine.

Interacts with PRX; this enhances phosphorylation. Identified in a dystroglycan complex that contains at least PRX, DRP2, UTRN, DMD and DAG1. Detected in fetal brain.

It localises to the postsynaptic density. It is found in the cell projection. The protein resides in the dendrite. The protein localises to the perikaryon. Its subcellular location is the cell membrane. Its function is as follows. Required for normal myelination and for normal organization of the cytoplasm and the formation of Cajal bands in myelinating Schwann cells. Required for normal PRX location at appositions between the abaxonal surface of the myelin sheath and the Schwann cell plasma membrane. Possibly involved in membrane-cytoskeleton interactions of the central nervous system. In Homo sapiens (Human), this protein is Dystrophin-related protein 2 (DRP2).